A 453-amino-acid polypeptide reads, in one-letter code: Bifunctional protein GlmU (453 aa).

The interval 1–228 (MPHWAAVIMA…VHEALGINSR (228 aa)) is pyrophosphorylase. Residues Lys23, Gln73, 78-79 (GT), 100-102 (SGD), Gly139, Glu153, Asn168, and Asn226 contribute to the UDP-N-acetyl-alpha-D-glucosamine site. Asp102 lines the Mg(2+) pocket. Asn226 is a Mg(2+) binding site. The interval 229 to 249 (AQLAAAEDVARQRILSYWMEE) is linker. Positions 250 to 453 (GVTIIDPRST…IENWVRNKKK (204 aa)) are N-acetyltransferase. UDP-N-acetyl-alpha-D-glucosamine contacts are provided by Arg331 and Lys349. Catalysis depends on His361, which acts as the Proton acceptor. Residues Tyr364 and Asn375 each coordinate UDP-N-acetyl-alpha-D-glucosamine. Acetyl-CoA-binding positions include Ala378, 384 to 385 (NY), Ser403, Ala421, and Arg438.

It in the N-terminal section; belongs to the N-acetylglucosamine-1-phosphate uridyltransferase family. This sequence in the C-terminal section; belongs to the transferase hexapeptide repeat family. Homotrimer. Mg(2+) serves as cofactor.

It is found in the cytoplasm. The catalysed reaction is alpha-D-glucosamine 1-phosphate + acetyl-CoA = N-acetyl-alpha-D-glucosamine 1-phosphate + CoA + H(+). It carries out the reaction N-acetyl-alpha-D-glucosamine 1-phosphate + UTP + H(+) = UDP-N-acetyl-alpha-D-glucosamine + diphosphate. It functions in the pathway nucleotide-sugar biosynthesis; UDP-N-acetyl-alpha-D-glucosamine biosynthesis; N-acetyl-alpha-D-glucosamine 1-phosphate from alpha-D-glucosamine 6-phosphate (route II): step 2/2. The protein operates within nucleotide-sugar biosynthesis; UDP-N-acetyl-alpha-D-glucosamine biosynthesis; UDP-N-acetyl-alpha-D-glucosamine from N-acetyl-alpha-D-glucosamine 1-phosphate: step 1/1. It participates in bacterial outer membrane biogenesis; LPS lipid A biosynthesis. In terms of biological role, catalyzes the last two sequential reactions in the de novo biosynthetic pathway for UDP-N-acetylglucosamine (UDP-GlcNAc). The C-terminal domain catalyzes the transfer of acetyl group from acetyl coenzyme A to glucosamine-1-phosphate (GlcN-1-P) to produce N-acetylglucosamine-1-phosphate (GlcNAc-1-P), which is converted into UDP-GlcNAc by the transfer of uridine 5-monophosphate (from uridine 5-triphosphate), a reaction catalyzed by the N-terminal domain. The protein is Bifunctional protein GlmU of Desulfitobacterium hafniense (strain DSM 10664 / DCB-2).